The sequence spans 86 residues: Candiduxin-2 (86 aa).

Positions 1–21 (MKTLLLTLVVLTIACLDLGYT) are cleaved as a signal peptide. 4 disulfide bridges follow: Cys24/Cys45, Cys38/Cys62, Cys66/Cys78, and Cys79/Cys84.

The protein belongs to the three-finger toxin family. Short-chain subfamily. Orphan group IX sub-subfamily. As to expression, expressed by the venom gland.

The protein resides in the secreted. This is Candiduxin-2 from Bungarus candidus (Malayan krait).